A 487-amino-acid polypeptide reads, in one-letter code: UDP-N-acetylmuramoyl-L-alanyl-D-glutamate--2,6-diaminopimelate ligase (487 aa).

Position 30 (serine 30) interacts with UDP-N-acetyl-alpha-D-muramoyl-L-alanyl-D-glutamate. An ATP-binding site is contributed by 109–115 (GTNGKTS). Residues 151–152 (TT), serine 178, and arginine 186 each bind UDP-N-acetyl-alpha-D-muramoyl-L-alanyl-D-glutamate. Lysine 218 carries the N6-carboxylysine modification. Residues arginine 379, 403–406 (DNPR), glycine 455, and glutamate 459 contribute to the meso-2,6-diaminopimelate site. The Meso-diaminopimelate recognition motif motif lies at 403–406 (DNPR).

The protein belongs to the MurCDEF family. MurE subfamily. It depends on Mg(2+) as a cofactor. In terms of processing, carboxylation is probably crucial for Mg(2+) binding and, consequently, for the gamma-phosphate positioning of ATP.

It is found in the cytoplasm. It carries out the reaction UDP-N-acetyl-alpha-D-muramoyl-L-alanyl-D-glutamate + meso-2,6-diaminopimelate + ATP = UDP-N-acetyl-alpha-D-muramoyl-L-alanyl-gamma-D-glutamyl-meso-2,6-diaminopimelate + ADP + phosphate + H(+). It functions in the pathway cell wall biogenesis; peptidoglycan biosynthesis. Catalyzes the addition of meso-diaminopimelic acid to the nucleotide precursor UDP-N-acetylmuramoyl-L-alanyl-D-glutamate (UMAG) in the biosynthesis of bacterial cell-wall peptidoglycan. The chain is UDP-N-acetylmuramoyl-L-alanyl-D-glutamate--2,6-diaminopimelate ligase from Alkaliphilus oremlandii (strain OhILAs) (Clostridium oremlandii (strain OhILAs)).